The primary structure comprises 150 residues: Macrodomain Ter protein (150 aa).

Belongs to the MatP family. As to quaternary structure, homodimer.

Its subcellular location is the cytoplasm. Required for spatial organization of the terminus region of the chromosome (Ter macrodomain) during the cell cycle. Prevents early segregation of duplicated Ter macrodomains during cell division. Binds specifically to matS, which is a 13 bp signature motif repeated within the Ter macrodomain. The sequence is that of Macrodomain Ter protein from Citrobacter koseri (strain ATCC BAA-895 / CDC 4225-83 / SGSC4696).